The primary structure comprises 855 residues: Valine--tRNA ligase (855 aa).

The 'HIGH' region signature appears at Pro-44–Asn-54. The 'KMSKS' region motif lies at Lys-522–Ser-526. An ATP-binding site is contributed by Lys-525.

The protein belongs to the class-I aminoacyl-tRNA synthetase family. ValS type 2 subfamily.

The protein resides in the cytoplasm. The enzyme catalyses tRNA(Val) + L-valine + ATP = L-valyl-tRNA(Val) + AMP + diphosphate. Its function is as follows. Catalyzes the attachment of valine to tRNA(Val). As ValRS can inadvertently accommodate and process structurally similar amino acids such as threonine, to avoid such errors, it has a 'posttransfer' editing activity that hydrolyzes mischarged Thr-tRNA(Val) in a tRNA-dependent manner. The protein is Valine--tRNA ligase of Methanothrix thermoacetophila (strain DSM 6194 / JCM 14653 / NBRC 101360 / PT) (Methanosaeta thermophila).